The sequence spans 231 residues: S-norcoclaurine synthase 2 (231 aa).

107-109 (YKE) contacts dopamine. Lys121 functions as the Proton donor in the catalytic mechanism. Position 140 (Asp140) interacts with (4-hydroxyphenyl)acetaldehyde. A helical membrane pass occupies residues 210 to 230 (LLLCLIICLVIAGGMFVAGVP).

Belongs to the BetVI family. Expressed in roots, stems and leaves. Detected in flower buds and germinating seeds. Low expression in carpels. Restricted to sieve elements of the phloem adjacent or proximal to laticifers.

The protein localises to the endoplasmic reticulum membrane. Its subcellular location is the vacuole membrane. The catalysed reaction is (4-hydroxyphenyl)acetaldehyde + dopamine = (S)-norcoclaurine + H2O. The protein operates within alkaloid biosynthesis; (S)-reticuline biosynthesis. Activity doubles within 5 hours of elicitor treatment and continues to increase for at least 80 hours. In terms of biological role, involved in the biosynthesis of (S)-coclaurine, the common precursor of all benzylisoquinoline alkaloids such as morphine, sanguinarine, codeine or papaverine. Condenses dopamine and 4-hydroxyphenylacetaldehyde. In Papaver somniferum (Opium poppy), this protein is S-norcoclaurine synthase 2.